A 403-amino-acid polypeptide reads, in one-letter code: RNA-binding motif, single-stranded-interacting protein 1 (403 aa).

The interval 30–56 (PAHPMAPPSPSTTSSNNNSSSSSNSGW) is disordered. The span at 40–54 (STTSSNNNSSSSSNS) shows a compositional bias: low complexity. RRM domains are found at residues 62–135 (TNLY…MAKQ) and 141–226 (TNLY…FADG). Threonine 208 is modified (phosphothreonine).

The protein resides in the nucleus. In terms of biological role, single-stranded DNA binding protein that interacts with the region upstream of the MYC gene. Binds specifically to the DNA sequence motif 5'-[AT]CT[AT][AT]T-3'. Probably has a role in DNA replication. This Rattus norvegicus (Rat) protein is RNA-binding motif, single-stranded-interacting protein 1.